Consider the following 313-residue polypeptide: Aspartate carbamoyltransferase catalytic subunit (313 aa).

Positions 58 and 59 each coordinate carbamoyl phosphate. Residue lysine 86 coordinates L-aspartate. Carbamoyl phosphate-binding residues include arginine 108, histidine 136, and glutamine 139. Positions 169 and 223 each coordinate L-aspartate. Positions 265 and 266 each coordinate carbamoyl phosphate.

The protein belongs to the aspartate/ornithine carbamoyltransferase superfamily. ATCase family. Heterododecamer (2C3:3R2) of six catalytic PyrB chains organized as two trimers (C3), and six regulatory PyrI chains organized as three dimers (R2).

The catalysed reaction is carbamoyl phosphate + L-aspartate = N-carbamoyl-L-aspartate + phosphate + H(+). It participates in pyrimidine metabolism; UMP biosynthesis via de novo pathway; (S)-dihydroorotate from bicarbonate: step 2/3. Functionally, catalyzes the condensation of carbamoyl phosphate and aspartate to form carbamoyl aspartate and inorganic phosphate, the committed step in the de novo pyrimidine nucleotide biosynthesis pathway. This chain is Aspartate carbamoyltransferase catalytic subunit, found in Anaeromyxobacter dehalogenans (strain 2CP-C).